Consider the following 230-residue polypeptide: Probable methylthioribulose-1-phosphate dehydratase (230 aa).

C87 is a substrate binding site. Zn(2+) is bound by residues H105 and H107. Residue E129 is the Proton donor/acceptor of the active site. A Zn(2+)-binding site is contributed by H185.

Belongs to the aldolase class II family. MtnB subfamily. Requires Zn(2+) as cofactor.

The protein resides in the cytoplasm. It catalyses the reaction 5-(methylsulfanyl)-D-ribulose 1-phosphate = 5-methylsulfanyl-2,3-dioxopentyl phosphate + H2O. Its pathway is amino-acid biosynthesis; L-methionine biosynthesis via salvage pathway; L-methionine from S-methyl-5-thio-alpha-D-ribose 1-phosphate: step 2/6. In terms of biological role, catalyzes the dehydration of methylthioribulose-1-phosphate (MTRu-1-P) into 2,3-diketo-5-methylthiopentyl-1-phosphate (DK-MTP-1-P). The sequence is that of Probable methylthioribulose-1-phosphate dehydratase from Drosophila virilis (Fruit fly).